A 424-amino-acid chain; its full sequence is Tyrosine--tRNA ligase (424 aa).

Tyrosine 37 is an L-tyrosine binding site. Positions 42-51 (PTADSLHLGH) match the 'HIGH' region motif. L-tyrosine contacts are provided by tyrosine 175 and glutamine 179. Positions 235-239 (KFGKT) match the 'KMSKS' region motif. Lysine 238 lines the ATP pocket. The region spanning 357-414 (ADLMQALVDAELQPSRGQARKTIASNAVTINGEKQSDPEYIFNDEDRLFGRYTLLRRG) is the S4 RNA-binding domain.

This sequence belongs to the class-I aminoacyl-tRNA synthetase family. TyrS type 1 subfamily. In terms of assembly, homodimer.

The protein resides in the cytoplasm. It carries out the reaction tRNA(Tyr) + L-tyrosine + ATP = L-tyrosyl-tRNA(Tyr) + AMP + diphosphate + H(+). Catalyzes the attachment of tyrosine to tRNA(Tyr) in a two-step reaction: tyrosine is first activated by ATP to form Tyr-AMP and then transferred to the acceptor end of tRNA(Tyr). The polypeptide is Tyrosine--tRNA ligase (Salmonella agona (strain SL483)).